The sequence spans 83 residues: Putative defensin-like protein 111 (83 aa).

The N-terminal stretch at Met1 to Cys24 is a signal peptide. 4 disulfides stabilise this stretch: Cys40–Cys80, Cys46–Cys69, Cys54–Cys78, and Cys58–Cys79.

The protein belongs to the DEFL family.

Its subcellular location is the secreted. This is Putative defensin-like protein 111 (LCR50) from Arabidopsis thaliana (Mouse-ear cress).